Reading from the N-terminus, the 199-residue chain is Recombination protein RecR (199 aa).

The segment at 58 to 73 (CKKCFNLTSEEECDIC) adopts a C4-type zinc-finger fold. One can recognise a Toprim domain in the interval 81–175 (NIICVVAETK…KVTRIAYGLP (95 aa)).

The protein belongs to the RecR family.

Its function is as follows. May play a role in DNA repair. It seems to be involved in an RecBC-independent recombinational process of DNA repair. It may act with RecF and RecO. This chain is Recombination protein RecR, found in Prochlorococcus marinus (strain MIT 9515).